The primary structure comprises 445 residues: Glutamate--tRNA ligase 1 (445 aa).

Positions 10–20 (PSPTGMLHVGN) match the 'HIGH' region motif. The short motif at 240-244 (KISKR) is the 'KMSKS' region element. Position 243 (Lys-243) interacts with ATP.

It belongs to the class-I aminoacyl-tRNA synthetase family. Glutamate--tRNA ligase type 1 subfamily. Monomer.

It localises to the cytoplasm. The enzyme catalyses tRNA(Glu) + L-glutamate + ATP = L-glutamyl-tRNA(Glu) + AMP + diphosphate. Its function is as follows. Catalyzes the attachment of glutamate to tRNA(Glu) in a two-step reaction: glutamate is first activated by ATP to form Glu-AMP and then transferred to the acceptor end of tRNA(Glu). In Rickettsia bellii (strain OSU 85-389), this protein is Glutamate--tRNA ligase 1.